Here is a 118-residue protein sequence, read N- to C-terminus: Basic phospholipase A2 PA-12C (118 aa).

7 cysteine pairs are disulfide-bonded: C11–C71, C27–C117, C29–C45, C44–C98, C51–C91, C60–C84, and C78–C89. Residues Y28, G30, and G32 each contribute to the Ca(2+) site. H48 is an active-site residue. D49 lines the Ca(2+) pocket. D92 is an active-site residue.

It belongs to the phospholipase A2 family. Group I subfamily. D49 sub-subfamily. Ca(2+) serves as cofactor. As to expression, expressed by the venom gland.

Its subcellular location is the secreted. It catalyses the reaction a 1,2-diacyl-sn-glycero-3-phosphocholine + H2O = a 1-acyl-sn-glycero-3-phosphocholine + a fatty acid + H(+). PLA2 catalyzes the calcium-dependent hydrolysis of the 2-acyl groups in 3-sn-phosphoglycerides. This chain is Basic phospholipase A2 PA-12C, found in Pseudechis australis (Mulga snake).